A 339-amino-acid polypeptide reads, in one-letter code: Nitrilase (339 aa).

The region spanning 7-277 is the CN hydrolase domain; sequence YRVAAVQASP…EGITYADIDL (271 aa). Glutamate 47 serves as the catalytic Proton acceptor. Catalysis depends on lysine 128, which acts as the Proton donor. Catalysis depends on cysteine 162, which acts as the Nucleophile.

The protein belongs to the carbon-nitrogen hydrolase superfamily. Nitrilase family.

It catalyses the reaction a nitrile + 2 H2O = a carboxylate + NH4(+). The chain is Nitrilase (nit) from Bacillus sp. (strain OxB-1).